An 81-amino-acid chain; its full sequence is Acyl carrier protein (81 aa).

Residues methionine 1–lysine 79 enclose the Carrier domain. The residue at position 39 (serine 39) is an O-(pantetheine 4'-phosphoryl)serine.

The protein belongs to the acyl carrier protein (ACP) family. In terms of processing, 4'-phosphopantetheine is transferred from CoA to a specific serine of apo-ACP by AcpS. This modification is essential for activity because fatty acids are bound in thioester linkage to the sulfhydryl of the prosthetic group.

The protein localises to the cytoplasm. It participates in lipid metabolism; fatty acid biosynthesis. In terms of biological role, carrier of the growing fatty acid chain in fatty acid biosynthesis. This is Acyl carrier protein from Syntrophobacter fumaroxidans (strain DSM 10017 / MPOB).